The sequence spans 476 residues: Glutamyl-tRNA(Gln) amidotransferase subunit A (476 aa).

Catalysis depends on charge relay system residues lysine 76 and serine 151. The active-site Acyl-ester intermediate is serine 175.

This sequence belongs to the amidase family. GatA subfamily. Heterotrimer of A, B and C subunits.

The catalysed reaction is L-glutamyl-tRNA(Gln) + L-glutamine + ATP + H2O = L-glutaminyl-tRNA(Gln) + L-glutamate + ADP + phosphate + H(+). Allows the formation of correctly charged Gln-tRNA(Gln) through the transamidation of misacylated Glu-tRNA(Gln) in organisms which lack glutaminyl-tRNA synthetase. The reaction takes place in the presence of glutamine and ATP through an activated gamma-phospho-Glu-tRNA(Gln). The polypeptide is Glutamyl-tRNA(Gln) amidotransferase subunit A (Chlorobium phaeobacteroides (strain DSM 266 / SMG 266 / 2430)).